We begin with the raw amino-acid sequence, 887 residues long: Microsomal triglyceride transfer protein large subunit (887 aa).

The first 11 residues, Phe-1 to Ser-11, serve as a signal peptide directing secretion. The Vitellogenin domain occupies Leu-21–Ile-655. An intrachain disulfide couples Cys-167 to Cys-187.

As to quaternary structure, heterodimer; heterodimerizes with the protein disulfide isomerase (P4HB/PDI). Interacts with APOB. Interacts with PRAP1.

Its subcellular location is the endoplasmic reticulum. It is found in the golgi apparatus. It carries out the reaction a 1,2-diacyl-sn-glycero-3-phosphocholine(in) = a 1,2-diacyl-sn-glycero-3-phosphocholine(out). The catalysed reaction is a 1,2-diacyl-sn-glycero-3-phosphoethanolamine(in) = a 1,2-diacyl-sn-glycero-3-phosphoethanolamine(out). The enzyme catalyses a cholesterol ester(in) = a cholesterol ester(out). It catalyses the reaction a triacyl-sn-glycerol(in) = a triacyl-sn-glycerol(out). Its function is as follows. Catalyzes the transport of triglyceride, cholesteryl ester, and phospholipid between phospholipid surfaces. Required for the assembly and secretion of plasma lipoproteins that contain apolipoprotein B. May be involved in regulating cholesteryl ester biosynthesis in cells that produce lipoproteins. In Bos taurus (Bovine), this protein is Microsomal triglyceride transfer protein large subunit (MTTP).